Here is a 281-residue protein sequence, read N- to C-terminus: S-methyl-5'-thioadenosine phosphorylase (281 aa).

Residues S15, 58 to 59 (RH), and 91 to 92 (TA) each bind phosphate. M194 provides a ligand contact to substrate. T195 is a phosphate binding site. 218–220 (DYD) contacts substrate.

The protein belongs to the PNP/MTAP phosphorylase family. MTAP subfamily. Homotrimer.

It localises to the cytoplasm. The protein resides in the nucleus. It catalyses the reaction S-methyl-5'-thioadenosine + phosphate = 5-(methylsulfanyl)-alpha-D-ribose 1-phosphate + adenine. It participates in amino-acid biosynthesis; L-methionine biosynthesis via salvage pathway; S-methyl-5-thio-alpha-D-ribose 1-phosphate from S-methyl-5'-thioadenosine (phosphorylase route): step 1/1. In terms of biological role, catalyzes the reversible phosphorylation of S-methyl-5'-thioadenosine (MTA) to adenine and 5-methylthioribose-1-phosphate. Involved in the breakdown of MTA, a major by-product of polyamine biosynthesis. Responsible for the first step in the methionine salvage pathway after MTA has been generated from S-adenosylmethionine. Has broad substrate specificity with 6-aminopurine nucleosides as preferred substrates. This is S-methyl-5'-thioadenosine phosphorylase (mtap) from Xenopus tropicalis (Western clawed frog).